The primary structure comprises 276 residues: Rhomboid protease GlpG (276 aa).

A run of 6 helical transmembrane segments spans residues 94–114, 142–162, 169–189, 192–212, 229–249, and 250–270; these read GPVT…MQIL, ALMH…WYLG, LGSG…GYVQ, FSGP…GYVW, LIIF…GMSM, and ANGA…VDSL. The active-site Nucleophile is Ser201. Residue His254 is part of the active site.

It belongs to the peptidase S54 family.

Its subcellular location is the cell inner membrane. The catalysed reaction is Cleaves type-1 transmembrane domains using a catalytic dyad composed of serine and histidine that are contributed by different transmembrane domains.. Its function is as follows. Rhomboid-type serine protease that catalyzes intramembrane proteolysis. The protein is Rhomboid protease GlpG of Escherichia coli (strain 55989 / EAEC).